A 339-amino-acid chain; its full sequence is Ketol-acid reductoisomerase (NADP(+)) (339 aa).

Residues Met1–Thr182 enclose the KARI N-terminal Rossmann domain. Residues Tyr24–Gln27, Lys48, Ser51, Thr53, and Asp83–Gln86 each bind NADP(+). His108 is a catalytic residue. Gly134 contacts NADP(+). One can recognise a KARI C-terminal knotted domain in the interval Asn183–Ile328. Residues Asp191, Glu195, Glu227, and Glu231 each coordinate Mg(2+). Ser252 serves as a coordination point for substrate.

The protein belongs to the ketol-acid reductoisomerase family. The cofactor is Mg(2+).

It carries out the reaction (2R)-2,3-dihydroxy-3-methylbutanoate + NADP(+) = (2S)-2-acetolactate + NADPH + H(+). The enzyme catalyses (2R,3R)-2,3-dihydroxy-3-methylpentanoate + NADP(+) = (S)-2-ethyl-2-hydroxy-3-oxobutanoate + NADPH + H(+). It functions in the pathway amino-acid biosynthesis; L-isoleucine biosynthesis; L-isoleucine from 2-oxobutanoate: step 2/4. It participates in amino-acid biosynthesis; L-valine biosynthesis; L-valine from pyruvate: step 2/4. Involved in the biosynthesis of branched-chain amino acids (BCAA). Catalyzes an alkyl-migration followed by a ketol-acid reduction of (S)-2-acetolactate (S2AL) to yield (R)-2,3-dihydroxy-isovalerate. In the isomerase reaction, S2AL is rearranged via a Mg-dependent methyl migration to produce 3-hydroxy-3-methyl-2-ketobutyrate (HMKB). In the reductase reaction, this 2-ketoacid undergoes a metal-dependent reduction by NADPH to yield (R)-2,3-dihydroxy-isovalerate. The sequence is that of Ketol-acid reductoisomerase (NADP(+)) from Mesorhizobium japonicum (strain LMG 29417 / CECT 9101 / MAFF 303099) (Mesorhizobium loti (strain MAFF 303099)).